Reading from the N-terminus, the 236-residue chain is Increased recombination centers protein 22-2 (236 aa).

Residues 1 to 19 (MKFSAILTALTATIATVAG) form the signal peptide. The Lumenal portion of the chain corresponds to 20–161 (YETSGKPHTV…AAVSFFDPRL (142 aa)). Residues 162–182 (IFLELVLLATFGGIAYFVYEI) traverse the membrane as a helical segment. Over 183–236 (WGKQYLRGTAPVKVPVKKSGSPVAVKEASPVGSASGFDESWIPEAHLKKNKKKA) the chain is Cytoplasmic.

This sequence belongs to the IRC22 family.

Its subcellular location is the endoplasmic reticulum membrane. Functionally, is probably involved in a pathway contributing to genomic integrity. This Candida tropicalis (strain ATCC MYA-3404 / T1) (Yeast) protein is Increased recombination centers protein 22-2 (IRC22-2).